The chain runs to 348 residues: MFYLSTFMTIVISLSLVSCSYDCNNPGFTCHGECHYYGSCICNERLTGYDCSVLKSSLSTGSDCKVTCQNNGRCYDGNKCLCSSDYTGHLCEKQTTGARCTLDGVVFEAYRPIGFDGETYLSQSRSCKLLQSESDVPGMIKFERKIFHGDTSMCGLKKHMDMPNAGDITYEADIYSTFVYNSWGTRDFVDNVKCQYKPTRVGLSMDAPDSLFPIKMSARDGASSNVQATTQSAPISLLFSPQNIPDVKGAMVDYMEVYSINSTSKEYKSVVAVKNGCAQKTEYNVAFDNLDELDPVTSTWIGLVKMQAFIIFENEPLLFNYRLRFCPDRCSKPTCAAPAVSQAPSTAV.

The first 19 residues, 1 to 19, serve as a signal peptide directing secretion; it reads MFYLSTFMTIVISLSLVSC. The EGF-like domain occupies 60-92; sequence TGSDCKVTCQNNGRCYDGNKCLCSSDYTGHLCE. 3 disulfides stabilise this stretch: Cys-64–Cys-74, Cys-68–Cys-80, and Cys-82–Cys-91. One can recognise a ZP domain in the interval 99-342; sequence RCTLDGVVFE…PTCAAPAVSQ (244 aa).

In terms of tissue distribution, prismatic layer of shell (at protein level). Expressed primarily in the mantle with highest level in the mantle edge and lower level in the mantle pallium.

It is found in the secreted. In Margaritifera margaritifera (Freshwater pearl mussel), this protein is EGF-like domain containing protein 1.